The chain runs to 119 residues: Beta-2-microglobulin (119 aa).

The first 20 residues, 1–20, serve as a signal peptide directing secretion; sequence MARFVVAALLVLLSLSGLEA. Residues 25–114 form the Ig-like C1-type domain; the sequence is PKIQVYSRHP…MTFPAPKTVK (90 aa). The cysteines at positions 45 and 100 are disulfide-linked.

It belongs to the beta-2-microglobulin family. Heterodimer of an alpha chain and a beta chain. Beta-2-microglobulin is the beta-chain of major histocompatibility complex class I molecules.

Its subcellular location is the secreted. In terms of biological role, component of the class I major histocompatibility complex (MHC). Involved in the presentation of peptide antigens to the immune system. The polypeptide is Beta-2-microglobulin (B2M) (Pithecia irrorata (Gray monk saki)).